The primary structure comprises 444 residues: Serine--tRNA ligase (444 aa).

248-250 provides a ligand contact to L-serine; it reads TSE. 279–281 provides a ligand contact to ATP; the sequence is RSE. Glu-302 is an L-serine binding site. Position 366–369 (366–369) interacts with ATP; it reads EISS. Residue Ser-401 coordinates L-serine.

Belongs to the class-II aminoacyl-tRNA synthetase family. Type-1 seryl-tRNA synthetase subfamily. In terms of assembly, homodimer. The tRNA molecule binds across the dimer.

Its subcellular location is the cytoplasm. The catalysed reaction is tRNA(Ser) + L-serine + ATP = L-seryl-tRNA(Ser) + AMP + diphosphate + H(+). The enzyme catalyses tRNA(Sec) + L-serine + ATP = L-seryl-tRNA(Sec) + AMP + diphosphate + H(+). The protein operates within aminoacyl-tRNA biosynthesis; selenocysteinyl-tRNA(Sec) biosynthesis; L-seryl-tRNA(Sec) from L-serine and tRNA(Sec): step 1/1. In terms of biological role, catalyzes the attachment of serine to tRNA(Ser). Is also able to aminoacylate tRNA(Sec) with serine, to form the misacylated tRNA L-seryl-tRNA(Sec), which will be further converted into selenocysteinyl-tRNA(Sec). The chain is Serine--tRNA ligase from Polaromonas naphthalenivorans (strain CJ2).